The sequence spans 484 residues: Falcipain-2a (484 aa).

The Cytoplasmic portion of the chain corresponds to Met1–Ser35. Residues Met1–Asp243 constitute a propeptide, activation peptide. Residues Gln16–Val25 carry the Bipartite vacuolar targeting signal 1 motif. Residues Leu36–Thr56 traverse the membrane as a helical; Signal-anchor for type II membrane protein segment. The Lumenal portion of the chain corresponds to Pro57–Glu484. The N-linked (GlcNAc...) asparagine glycan is linked to Asn67. The Bipartite vacuolar targeting signal 2 signature appears at Lys84–Ser105. A Nose motif; required for the correct folding of the mature form motif is present at residues Gln244–Phe260. Disulfide bonds link Cys282–Cys323, Cys316–Cys357, Cys342–Cys362, and Cys411–Cys472. Cys285 is an active-site residue. His417 is an active-site residue. The Arm motif; binds to host hemoglobin and required for the inhibitory interaction between the propeptide and the catalytic domain signature appears at Glu428 to Gly437. The active site involves Asn447.

Belongs to the peptidase C1 family. As to quaternary structure, component of the hemozoin formation complex (HFC) composed of falcipains FP2A and/or FP2B, plasmepsins PMII, PMIII/HAP and PMIV, heme detoxifying protein HDP and falcilysin FLN. The HFC complex is involved in hemoglobin degradation and detoxification of heme in the food vacuole during the asexual blood stage. In terms of processing, auto-cleaved to remove the propeptide.

It is found in the vacuole. The protein resides in the membrane. With respect to regulation, inhibited by cysteine protease inhibitor ICP. Inhibited by heme and heme analogs. Cysteine protease which cleaves native host hemoglobin and globin in the food vacuole during the asexual blood stage. The binding to host hemoglobin is pH-sensitive and only occurs at acidic pH. Cleaves ankyrin and protein 4.1, two components of host erythrocyte membrane cytoskeleton required for the stability of the erythrocyte membrane, and thus may be involved in parasite release. Preferentially cleaves substrates which have an arginine or lysine at the P1 position and a leucine or phenylalanine at the P2 position. This Plasmodium falciparum (isolate 3D7) protein is Falcipain-2a.